The sequence spans 130 residues: Holo-[acyl-carrier-protein] synthase (130 aa).

Residues Asp9 and Glu58 each contribute to the Mg(2+) site.

Belongs to the P-Pant transferase superfamily. AcpS family. Requires Mg(2+) as cofactor.

It is found in the cytoplasm. It catalyses the reaction apo-[ACP] + CoA = holo-[ACP] + adenosine 3',5'-bisphosphate + H(+). Transfers the 4'-phosphopantetheine moiety from coenzyme A to a Ser of acyl-carrier-protein. This chain is Holo-[acyl-carrier-protein] synthase, found in Mycolicibacterium paratuberculosis (strain ATCC BAA-968 / K-10) (Mycobacterium paratuberculosis).